Consider the following 126-residue polypeptide: Small ribosomal subunit protein uS11 (126 aa).

It belongs to the universal ribosomal protein uS11 family. As to quaternary structure, part of the 30S ribosomal subunit. Interacts with proteins S7 and S18. Binds to IF-3.

In terms of biological role, located on the platform of the 30S subunit, it bridges several disparate RNA helices of the 16S rRNA. Forms part of the Shine-Dalgarno cleft in the 70S ribosome. In Treponema pallidum (strain Nichols), this protein is Small ribosomal subunit protein uS11.